We begin with the raw amino-acid sequence, 95 residues long: DNA-directed RNA polymerase subunit Rpo11 (95 aa).

Belongs to the archaeal Rpo11/eukaryotic RPB11/RPC19 RNA polymerase subunit family. In terms of assembly, part of the RNA polymerase complex.

It is found in the cytoplasm. It catalyses the reaction RNA(n) + a ribonucleoside 5'-triphosphate = RNA(n+1) + diphosphate. DNA-dependent RNA polymerase (RNAP) catalyzes the transcription of DNA into RNA using the four ribonucleoside triphosphates as substrates. The polypeptide is DNA-directed RNA polymerase subunit Rpo11 (Pyrococcus abyssi (strain GE5 / Orsay)).